The primary structure comprises 914 residues: Protein translocase subunit SecA (914 aa).

Residues glutamine 87, 105-109 (GEGKT), and aspartate 508 each bind ATP. Positions 898, 900, 909, and 910 each coordinate Zn(2+).

Belongs to the SecA family. In terms of assembly, monomer and homodimer. Part of the essential Sec protein translocation apparatus which comprises SecA, SecYEG and auxiliary proteins SecDF-YajC and YidC. Requires Zn(2+) as cofactor.

It is found in the cell inner membrane. It localises to the cytoplasm. The catalysed reaction is ATP + H2O + cellular proteinSide 1 = ADP + phosphate + cellular proteinSide 2.. In terms of biological role, part of the Sec protein translocase complex. Interacts with the SecYEG preprotein conducting channel. Has a central role in coupling the hydrolysis of ATP to the transfer of proteins into and across the cell membrane, serving both as a receptor for the preprotein-SecB complex and as an ATP-driven molecular motor driving the stepwise translocation of polypeptide chains across the membrane. This Xylella fastidiosa (strain 9a5c) protein is Protein translocase subunit SecA.